A 174-amino-acid chain; its full sequence is NADH-ubiquinone oxidoreductase chain 6 (174 aa).

The next 4 membrane-spanning stretches (helical) occupy residues 24 to 44, 53 to 73, 82 to 102, and 143 to 163; these read LALG…TGLM, ILFL…TSLA, MKLT…SFIM, and FITI…VKIT.

This sequence belongs to the complex I subunit 6 family.

It localises to the mitochondrion membrane. The enzyme catalyses a ubiquinone + NADH + 5 H(+)(in) = a ubiquinol + NAD(+) + 4 H(+)(out). Core subunit of the mitochondrial membrane respiratory chain NADH dehydrogenase (Complex I) that is believed to belong to the minimal assembly required for catalysis. Complex I functions in the transfer of electrons from NADH to the respiratory chain. The immediate electron acceptor for the enzyme is believed to be ubiquinone. The sequence is that of NADH-ubiquinone oxidoreductase chain 6 (mt:ND6) from Drosophila melanogaster (Fruit fly).